The following is a 399-amino-acid chain: MDLKITNGFYDPSHLSYEVVERKGLGHPDTLADGIAEQIEIDYSLYCLDKFGVIPHHNFDKIIIRGGHSVQDFGGSDFIEPIKIIFLGRASKKCFNSSIPLFKIQKKAATKYLNRILPNLDVENYVEFETLTSDFTTKTNWFSPEAIEDLPEYLDVPKANDTATMISYWPLTISEELALMIEGYFYKLDKNELPTPRFTKMGGDIKVMVVRNDLEYSIRINFPLISKFFNNDIESQLYVDKHVEKIKKYIEQKYKNISFSIDYHYYLTTTGSCIDFGEEGAVGRGNKTHGIISSFRPNTMEAPAGKNCTYFVGKVWGFLSDTIAKEIYEAFNTPCQIIMQLNIGSKLYRPTHLFIQTEESVDQERVLEIVNRHLNNGKQNTNLILSTQHFIPKTNVYDG.

Belongs to the AdoMet synthetase 2 family.

This is an uncharacterized protein from Streptococcus pyogenes serotype M1.